Here is a 252-residue protein sequence, read N- to C-terminus: Small ribosomal subunit protein uS3 (252 aa).

A KH type-2 domain is found at 39 to 109 (IRNYVNTRLK…EVKIDVVEVV (71 aa)). Positions 222 to 240 (MKKIRDRRNDQRSRGGRDS) are enriched in basic and acidic residues. The tract at residues 222 to 252 (MKKIRDRRNDQRSRGGRDSRNKRRRRPKNTA) is disordered. Basic residues predominate over residues 241 to 252 (RNKRRRRPKNTA).

The protein belongs to the universal ribosomal protein uS3 family. In terms of assembly, part of the 30S ribosomal subunit. Forms a tight complex with proteins S10 and S14.

Binds the lower part of the 30S subunit head. Binds mRNA in the 70S ribosome, positioning it for translation. The chain is Small ribosomal subunit protein uS3 from Chlorobium phaeobacteroides (strain BS1).